Here is a 446-residue protein sequence, read N- to C-terminus: Iroquois homeobox protein 5a (446 aa).

Residues 117–173 constitute a DNA-binding region (homeobox); that stretch reads NATRDATATLKAWLNEHRKNPYPTKGEKIMLAIITKMTLTQVSTWFANARRRLKKEN. Positions 175-312 are disordered; the sequence is MTWTPRNRSE…IHSPPSAPKP (138 aa). Acidic residues predominate over residues 184–201; it reads EDEEEDENIDLEKNDDDE. Composition is skewed to basic and acidic residues over residues 202–220 and 227–258; these read PNKP…DHKL and PCDR…RTDL. Polar residues-rich tracts occupy residues 264-274 and 293-303; these read KPTTSSPSVLQ and STGNSNVTSVI.

The protein belongs to the TALE/IRO homeobox family.

The protein localises to the nucleus. In terms of biological role, transcription factor. Binds to consensus iroquois binding site (IBS) motifs 5'-ACANNTGT-3' or 5'-ACANNNTGT-3' in regulatory elements of target genes. Required, together with irx7, for hyoid joint formation; they act cell autonomously to repress expression of cartilage matrix genes, such as collagen col2a1a, within immature chondrocytes of the joint interzone. May compete with or modify Sox9a activity, thereby reducing Sox9a-mediated activation of col2a1a. Probably acts in the developing hyoid joint downstream of Bmp signaling. In concert with irx6a, plays a role in visual performance. This is Iroquois homeobox protein 5a (irx5a) from Danio rerio (Zebrafish).